The primary structure comprises 559 residues: T-complex protein 1 subunit gamma (559 aa).

Residues cysteine 369 and cysteine 375 are joined by a disulfide bond. The disordered stretch occupies residues 537-559; it reads GGASVTDGNGQEIPETFGDARDG.

The protein belongs to the TCP-1 chaperonin family. As to quaternary structure, heterooligomeric complex of about 850 to 900 kDa that forms two stacked rings, 12 to 16 nm in diameter.

The protein resides in the cytoplasm. In terms of biological role, molecular chaperone; assists the folding of proteins upon ATP hydrolysis. Known to play a role, in vitro, in the folding of actin and tubulin. This Tetrahymena pyriformis protein is T-complex protein 1 subunit gamma.